The primary structure comprises 363 residues: tRNA/tmRNA (uracil-C(5))-methyltransferase (363 aa).

Residues Gln-187, Tyr-215, Asn-220, Glu-236, and Asp-296 each coordinate S-adenosyl-L-methionine. The active-site Nucleophile is Cys-321. The Proton acceptor role is filled by Glu-355.

Belongs to the class I-like SAM-binding methyltransferase superfamily. RNA M5U methyltransferase family. TrmA subfamily.

It carries out the reaction uridine(54) in tRNA + S-adenosyl-L-methionine = 5-methyluridine(54) in tRNA + S-adenosyl-L-homocysteine + H(+). The enzyme catalyses uridine(341) in tmRNA + S-adenosyl-L-methionine = 5-methyluridine(341) in tmRNA + S-adenosyl-L-homocysteine + H(+). Its function is as follows. Dual-specificity methyltransferase that catalyzes the formation of 5-methyluridine at position 54 (m5U54) in all tRNAs, and that of position 341 (m5U341) in tmRNA (transfer-mRNA). This chain is tRNA/tmRNA (uracil-C(5))-methyltransferase, found in Pseudomonas aeruginosa (strain ATCC 15692 / DSM 22644 / CIP 104116 / JCM 14847 / LMG 12228 / 1C / PRS 101 / PAO1).